Reading from the N-terminus, the 194-residue chain is Protein PHLOEM PROTEIN 2-LIKE A2 (194 aa).

The helical transmembrane segment at 49–71 (VTFVFFCFFKISLNSAYLYTLYS) threads the bilayer.

In terms of tissue distribution, vascular tissues, specifically in phloem companion cell-sieve element complexes.

It localises to the membrane. This chain is Protein PHLOEM PROTEIN 2-LIKE A2 (PP2A2), found in Arabidopsis thaliana (Mouse-ear cress).